Reading from the N-terminus, the 852-residue chain is Lon protease homolog 2, peroxisomal (852 aa).

S2 carries the N-acetylserine modification. A Lon N-terminal domain is found at 13–222 (LPLLLTHEGV…MTIPLLVRQI (210 aa)). Residue 375–382 (GPPGVGKT) coordinates ATP. In terms of domain architecture, Lon proteolytic spans 651–837 (LSQPGVAIGL…DEVLNAAFDG (187 aa)). Active-site residues include S743 and K786. The short motif at 850-852 (SKL) is the Microbody targeting signal element.

This sequence belongs to the peptidase S16 family. In terms of assembly, interacts with PEX5. Interacts with TYSND1. May interact with enzymes involved in beta-oxidation of fatty acids, including ACOX1/AOX.

The protein localises to the peroxisome matrix. It carries out the reaction Hydrolysis of proteins in presence of ATP.. Its function is as follows. ATP-dependent serine protease that mediates the selective degradation of misfolded and unassembled polypeptides in the peroxisomal matrix. Necessary for type 2 peroxisome targeting signal (PTS2)-containing protein processing and facilitates peroxisome matrix protein import. May indirectly regulate peroxisomal fatty acid beta-oxidation through degradation of the self-processed forms of TYSND1. The protein is Lon protease homolog 2, peroxisomal of Pongo abelii (Sumatran orangutan).